The primary structure comprises 680 residues: ABC transporter B family member 24, mitochondrial (680 aa).

A mitochondrion-targeting transit peptide spans 1 to 75 (MMRVSQLQLC…MFFSTSTSAP (75 aa)). The region spanning 108 to 402 (VISAFACLVG…LGVVYSDTVQ (295 aa)) is the ABC transmembrane type-1 domain. 6 helical membrane-spanning segments follow: residues 109-129 (ISAF…PFLF), 145-165 (NPYL…YGIA), 232-252 (AMVF…CILA), 255-275 (FGAV…AFTL), 340-360 (FALL…TAMV), and 376-396 (LVMV…LGVV). The region spanning 439–673 (ISFENVHFSY…SGRYAKLWTQ (235 aa)) is the ABC transporter domain. Residues Y448 and 472-483 (GSSGSGKSTILR) contribute to the ATP site.

The protein belongs to the ABC transporter superfamily. ABCB family. Heavy Metal importer (TC 3.A.1.210) subfamily. Homodimer. In terms of tissue distribution, mostly expressed at low levels in roots and flowers.

Its subcellular location is the mitochondrion inner membrane. Functionally, performs an essential function in the generation of cytoplasmic iron-sulfur proteins by mediating export of Fe/S cluster precursors synthesized by NFS1 and other mitochondrial proteins. Not involved in the export of cyclic pyranopterin monophosphate (cPMP) from mitochondria to the cytosol. The sequence is that of ABC transporter B family member 24, mitochondrial (ABCB24) from Arabidopsis thaliana (Mouse-ear cress).